A 573-amino-acid polypeptide reads, in one-letter code: Sterol esterase 1 (573 aa).

The Cytoplasmic segment spans residues 1–12 (MGVSAVLKRARN). An intramembrane segment occupies 13–33 (LLATFIVCCFMAVVLVLALAH). The Cytoplasmic portion of the chain corresponds to 34-573 (HFINEHRDTR…TELEMVAEKA (540 aa)). Ser-315 functions as the Nucleophile in the catalytic mechanism. Residues Asp-489 and His-520 each act as charge relay system in the active site.

It belongs to the AB hydrolase superfamily. Not N-glycosylated.

The protein resides in the lipid droplet. Its subcellular location is the membrane. It carries out the reaction a sterol ester + H2O = a sterol + a fatty acid + H(+). Functionally, mediates the hydrolysis of steryl esters, thereby playing a central role in lipid metabolism. Under heme-deficient conditions, it constitutes the major steryl ester hydrolase, suggesting that it plays a central role in mobilization of steryl esters under anaerobic conditions. This Saccharomyces cerevisiae (strain ATCC 204508 / S288c) (Baker's yeast) protein is Sterol esterase 1 (YEH1).